A 372-amino-acid polypeptide reads, in one-letter code: Aminomethyltransferase (372 aa).

It belongs to the GcvT family. The glycine cleavage system is composed of four proteins: P, T, L and H.

The catalysed reaction is N(6)-[(R)-S(8)-aminomethyldihydrolipoyl]-L-lysyl-[protein] + (6S)-5,6,7,8-tetrahydrofolate = N(6)-[(R)-dihydrolipoyl]-L-lysyl-[protein] + (6R)-5,10-methylene-5,6,7,8-tetrahydrofolate + NH4(+). In terms of biological role, the glycine cleavage system catalyzes the degradation of glycine. In Burkholderia multivorans (strain ATCC 17616 / 249), this protein is Aminomethyltransferase.